Reading from the N-terminus, the 184-residue chain is uncharacterized protein (184 aa).

A disordered region spans residues 130–149 (DKDDDKKKKKKDDKKDDPCN).

The protein resides in the virion. This is an uncharacterized protein from Acanthamoeba polyphaga (Amoeba).